Reading from the N-terminus, the 1178-residue chain is Pyruvate carboxylase 1 (1178 aa).

Residues 18-470 (EKNKILVANR…WTTFIDDTPQ (453 aa)) enclose the Biotin carboxylation domain. Lysine 136, glutamate 220, and histidine 255 together coordinate ATP. The ATP-grasp domain maps to 140–337 (RNLAAKANVP…IVAAQIQIAA (198 aa)). The active site involves arginine 312. The Pyruvate carboxyltransferase domain maps to 557–824 (TLLMDTTWRD…DTGINVEHVR (268 aa)). Substrate-binding positions include 565-569 (RDAHQ) and arginine 638. Aspartate 566 contacts a divalent metal cation. A divalent metal cation-binding residues include lysine 734, histidine 764, and histidine 766. Lysine 734 is modified (N6-carboxylysine). Residue threonine 898 participates in substrate binding. The 76-residue stretch at 1094-1169 (KADMHDPLHI…DSSDLLVLLE (76 aa)) folds into the Biotinyl-binding domain. The residue at position 1135 (lysine 1135) is an N6-biotinyllysine.

Homotetramer. It depends on biotin as a cofactor. The cofactor is Zn(2+).

It localises to the cytoplasm. It carries out the reaction hydrogencarbonate + pyruvate + ATP = oxaloacetate + ADP + phosphate + H(+). It participates in carbohydrate biosynthesis; gluconeogenesis. Functionally, pyruvate carboxylase catalyzes a 2-step reaction, involving the ATP-dependent carboxylation of the covalently attached biotin in the first step and the transfer of the carboxyl group to pyruvate in the second. In Saccharomyces cerevisiae (strain ATCC 204508 / S288c) (Baker's yeast), this protein is Pyruvate carboxylase 1 (PYC1).